We begin with the raw amino-acid sequence, 388 residues long: Protein RMD5 homolog (388 aa).

Residues D112 to E144 enclose the LisH domain. In terms of domain architecture, CTLH spans S150 to E207. The RING-Gid-type zinc-finger motif lies at C330 to C374.

Interacts with RANBPM.

The protein localises to the cytoplasm. In Arabidopsis thaliana (Mouse-ear cress), this protein is Protein RMD5 homolog.